The chain runs to 1369 residues: Microtubule-associated tumor suppressor candidate 2 (1369 aa).

Disordered regions lie at residues 180 to 262 (ASSS…TQTV), 374 to 442 (GRGN…FIPN), 477 to 509 (GENKTEVPEPLDPQSGRSEARESKEVTTSVAEN), 582 to 627 (NTSP…EERT), 791 to 839 (RSSA…LRPP), 861 to 992 (SSVS…QARE), and 1331 to 1369 (WKLQTGDPTSPIKLSPTSPVYRGSSSGPSSPARVSTTPR). Composition is skewed to polar residues over residues 246–262 (PSTSESKQSTPSETQTV) and 392–401 (LHTTPKQGSA). Residues 641-980 (RPKIITYIRR…PKQRTAAARN (340 aa)) are mediates interaction with MAPRE1. Residues 801-890 (GPITTATSLY…TRSTFGNEEQ (90 aa)) form a sufficient for interaction with KIF2C region. The interval 801 to 1150 (GPITTATSLY…HDAALLEMEN (350 aa)) is localization to the growing distal tip of microtubules. Positions 804–814 (TTATSLYSSDP) are enriched in polar residues. Positions 821 to 834 (ASSSNAAKSNLPKS) are enriched in low complexity. A compositionally biased stretch (basic and acidic residues) spans 937–947 (TKKDAQKDQDT). The stretch at 991–1335 (REAERQLVLR…NEELLWKLQT (345 aa)) forms a coiled coil. Residues 1348–1369 (SPVYRGSSSGPSSPARVSTTPR) show a composition bias toward low complexity.

It in the C-terminal section; belongs to the MTUS1 family. Homodimer. Interacts with KIF2C and MAPRE1; the interaction is direct and probably targets MTUS2 and KIF2C to microtubules. As to expression, detected in embryonic stem cells differentiating to cardiomyocytes.

Its subcellular location is the cytoplasm. The protein localises to the cytoskeleton. Binds microtubules. Together with MAPRE1 may target the microtubule depolymerase KIF2C to the plus-end of microtubules. May regulate the dynamics of microtubules at their growing distal tip. This Homo sapiens (Human) protein is Microtubule-associated tumor suppressor candidate 2 (MTUS2).